The following is a 172-amino-acid chain: Transcriptional regulator TAC1 (172 aa).

The segment at 1-28 is disordered; that stretch reads MENIKNPKNADDCSDSISKNSHQGVDDS. Over residues 15–28 the composition is skewed to polar residues; the sequence is DSISKNSHQGVDDS. Residues 35–57 form a C2H2-type zinc finger; that stretch reads YVCSFCIRGFSNAQALGGHMNIH. An EAR-like (transcriptional repression) motif is present at residues 156–160; sequence LDLEL.

Preferentially expressed in roots and flowers. Slightly expressed in leaves and stems.

It localises to the nucleus. Activation factor which mediates telomerase activity and potentiates responses to auxin through the regulation of BT2. Binds in vitro to the DNA sequence 5'-GACAGTGTTAC-3' of the BT2 promoter. The chain is Transcriptional regulator TAC1 (TAC1) from Arabidopsis thaliana (Mouse-ear cress).